The chain runs to 494 residues: Syntaphilin (494 aa).

The tract at residues 1–75 (MAMSLPGSRR…GIKPPTPEQY (75 aa)) is disordered. Residues 7–49 (GSRRTSAGSRRRTSPPVSVRDAYGTSSLSSSSNSGSYKGSDSS) are compositionally biased toward low complexity. The stretch at 79–161 (LQQKEVCIRH…VKNNLIDKDK (83 aa)) forms a coiled coil. 2 disordered regions span residues 191-246 (MAKE…SGFA) and 338-398 (CGTD…GQSV). Ser200 and Ser204 each carry phosphoserine. The segment covering 207-217 (RSLTRSSTYTK) has biased composition (polar residues). Position 214 is a phosphothreonine (Thr214). Ser219 is subject to Phosphoserine. The span at 230–246 (GDPSSGSAEDGADSGFA) shows a compositional bias: low complexity. Basic and acidic residues predominate over residues 344–353 (SGDRCPELDA). Residues 425-444 (YIVDLLAVVVPAVPTVAWLC) traverse the membrane as a helical segment.

As to quaternary structure, binds to STX1A. Interacts with DNM1; this interaction inhibits the binding of DNM1 to AMPH and DNM1-receptor-mediated endocytosis. As to expression, brain specific. Found in synapses.

The protein localises to the membrane. It is found in the synapse. It localises to the synaptosome. Functionally, inhibits SNARE complex formation by absorbing free STX1A. In Homo sapiens (Human), this protein is Syntaphilin.